Consider the following 497-residue polypeptide: Glutamate--tRNA ligase (497 aa).

The 'HIGH' region signature appears at 12-22 (PSPTGHLHIGN). The 'KMSKS' region signature appears at 259–263 (KLSKR). Lys262 lines the ATP pocket.

The protein belongs to the class-I aminoacyl-tRNA synthetase family. Glutamate--tRNA ligase type 1 subfamily. Monomer.

Its subcellular location is the cytoplasm. It carries out the reaction tRNA(Glu) + L-glutamate + ATP = L-glutamyl-tRNA(Glu) + AMP + diphosphate. Its function is as follows. Catalyzes the attachment of glutamate to tRNA(Glu) in a two-step reaction: glutamate is first activated by ATP to form Glu-AMP and then transferred to the acceptor end of tRNA(Glu). The sequence is that of Glutamate--tRNA ligase from Lacticaseibacillus casei (strain BL23) (Lactobacillus casei).